Consider the following 795-residue polypeptide: Phenylalanine--tRNA ligase beta subunit (795 aa).

The region spanning Lys-39–Tyr-148 is the tRNA-binding domain. One can recognise a B5 domain in the interval His-400–Leu-475. The Mg(2+) site is built by Asp-453, Asp-459, and Asp-463. One can recognise an FDX-ACB domain in the interval Ser-701 to Arg-794.

It belongs to the phenylalanyl-tRNA synthetase beta subunit family. Type 1 subfamily. As to quaternary structure, tetramer of two alpha and two beta subunits. It depends on Mg(2+) as a cofactor.

It localises to the cytoplasm. The catalysed reaction is tRNA(Phe) + L-phenylalanine + ATP = L-phenylalanyl-tRNA(Phe) + AMP + diphosphate + H(+). This is Phenylalanine--tRNA ligase beta subunit (pheT) from Buchnera aphidicola subsp. Acyrthosiphon pisum (strain APS) (Acyrthosiphon pisum symbiotic bacterium).